Here is a 515-residue protein sequence, read N- to C-terminus: MAEQVALSRTQVCGILREELFQGDAFHQSDTHIFIIMGASGDLAKKKIYPTIWWLFRDGLLPENTFIVGYARSRLTVADIRKQSEPFFKATPEEKLKLEDFFARNSYVAGQYDDAASYQRLNSHMNALHLGSQANRLFYLALPPTVYEAVTKNIHESCMSQIGWNRIIVEKPFGRDLQSSDRLSNHISSLFREDQIYRIDHYLGKEMVQNLMVLRFANRIFGPIWNRDNIACVILTFKEPFGTEGRGGYFDEFGIIRDVMQNHLLQMLCLVAMEKPASTNSDDVRDEKVKVLKCISEVQANNVVLGQYVGNPDGEGEATKGYLDDPTVPRGSTTATFAAVVLYVENERWDGVPFILRCGKALNERKAEVRLQFHDVAGDIFHQQCKRNELVIRVQPNEAVYTKMMTKKPGMFFNPEESELDLTYGNRYKNVKLPDAYERLILDVFCGSQMHFVRSDELREAWRIFTPLLHQIELEKPKPIPYIYGSRGPTEADELMKRVGFQYEGTYKWVNPHKL.

A2 carries the N-acetylalanine modification. S8 bears the Phosphoserine mark. T10 is modified (phosphothreonine). F26 is modified (phosphoserine). NADP(+) contacts are provided by residues 38-45 (GASGDLAK) and R72. An N6-acetyllysine modification is found at K89. Residues Y147 and K171 each contribute to the NADP(+) site. Residues K171, 201–205 (HYLGK), E239, and D258 each bind D-glucose 6-phosphate. Position 171 is an N6-(2-hydroxyisobutyryl)lysine; alternate (K171). K171 is modified (N6-acetyllysine; alternate). The active-site Proton acceptor is the H263. R357 serves as a coordination point for NADP(+). Residues K360 and R365 each contribute to the D-glucose 6-phosphate site. 3 residues coordinate NADP(+): K366, R370, and R393. Q395 is a binding site for D-glucose 6-phosphate. NADP(+) contacts are provided by residues 401–403 (YTK) and 421–423 (DLT). N6-acetyllysine is present on K403. An N6-acetyllysine modification is found at K432. R487 is a binding site for NADP(+). At K497 the chain carries N6-acetyllysine. Positions 503 and 509 each coordinate NADP(+). Position 503 is a phosphotyrosine (Y503).

It belongs to the glucose-6-phosphate dehydrogenase family. In terms of assembly, homotetramer; dimer of dimers. Interacts with SIRT2; the interaction is enhanced by H(2)O(2) treatment. Forms a ternary complex with ALDOB and TP53; this interaction is direct. ALDOB stabilizes the complex inhibiting G6PD activity and keeping oxidative pentose phosphate metabolism in check. In terms of processing, acetylated by ELP3 at Lys-403; acetylation inhibits its homodimerization and enzyme activity. Deacetylated by SIRT2 at Lys-403; deacetylation stimulates its enzyme activity. As to expression, isoform Long is found in lymphoblasts, granulocytes and sperm.

The protein localises to the cytoplasm. It is found in the cytosol. It localises to the membrane. The enzyme catalyses D-glucose 6-phosphate + NADP(+) = 6-phospho-D-glucono-1,5-lactone + NADPH + H(+). It participates in carbohydrate degradation; pentose phosphate pathway; D-ribulose 5-phosphate from D-glucose 6-phosphate (oxidative stage): step 1/3. Catalyzes the rate-limiting step of the oxidative pentose-phosphate pathway, which represents a route for the dissimilation of carbohydrates besides glycolysis. The main function of this enzyme is to provide reducing power (NADPH) and pentose phosphates for fatty acid and nucleic acid synthesis. The protein is Glucose-6-phosphate 1-dehydrogenase (G6PD) of Homo sapiens (Human).